A 216-amino-acid chain; its full sequence is Pathogenicity-related ORF2 (216 aa).

4 helical membrane-spanning segments follow: residues 6–26 (VGSL…AAMV), 55–75 (LNGV…MEAF), 157–177 (IGFL…NALM), and 193–213 (FKLL…GLVL).

It belongs to the FliP/MopC/SpaP family.

It is found in the cell membrane. Functionally, important for pathogenicity. The protein is Pathogenicity-related ORF2 of Xanthomonas campestris pv. glycines.